The primary structure comprises 351 residues: Protein Maqu_2141 (351 aa).

Belongs to the proline racemase family.

In terms of biological role, displays neither proline racemase activity nor trans-4-hydroxy-L-proline (t4LHyp) epimerase activity nor t3LHyp dehydratase activity. The chain is Protein Maqu_2141 from Marinobacter nauticus (strain ATCC 700491 / DSM 11845 / VT8) (Marinobacter aquaeolei).